Reading from the N-terminus, the 287-residue chain is Nucleotide-binding protein HD_0584 (287 aa).

ATP is bound at residue 8–15; that stretch reads GRSGSGKS. 56–59 is a binding site for GTP; the sequence is DIRN.

Belongs to the RapZ-like family.

Displays ATPase and GTPase activities. The protein is Nucleotide-binding protein HD_0584 of Haemophilus ducreyi (strain 35000HP / ATCC 700724).